Reading from the N-terminus, the 189-residue chain is Large ribosomal subunit protein bL17 (189 aa).

The disordered stretch occupies residues 136–189 (KAAPAAEEEVVETEEAPAVEAEAAESEEAPAAEAEAAEAEAAETEEAPAAEDKK). Acidic residues predominate over residues 141-189 (AEEEVVETEEAPAVEAEAAESEEAPAAEAEAAEAEAAETEEAPAAEDKK).

The protein belongs to the bacterial ribosomal protein bL17 family. Part of the 50S ribosomal subunit. Contacts protein L32.

The sequence is that of Large ribosomal subunit protein bL17 from Paenarthrobacter aurescens (strain TC1).